Reading from the N-terminus, the 594-residue chain is NADH-quinone oxidoreductase subunit C/D (594 aa).

The interval 1–185 (MTTGSALYIP…DPFSLNLAKQ (185 aa)) is NADH dehydrogenase I subunit C. An NADH dehydrogenase I subunit D region spans residues 209–594 (DYMFLNLGPN…IDFVMADVDR (386 aa)).

This sequence in the N-terminal section; belongs to the complex I 30 kDa subunit family. The protein in the C-terminal section; belongs to the complex I 49 kDa subunit family. As to quaternary structure, NDH-1 is composed of 13 different subunits. Subunits NuoB, CD, E, F, and G constitute the peripheral sector of the complex.

Its subcellular location is the cell inner membrane. It carries out the reaction a quinone + NADH + 5 H(+)(in) = a quinol + NAD(+) + 4 H(+)(out). Its function is as follows. NDH-1 shuttles electrons from NADH, via FMN and iron-sulfur (Fe-S) centers, to quinones in the respiratory chain. The immediate electron acceptor for the enzyme in this species is believed to be ubiquinone. Couples the redox reaction to proton translocation (for every two electrons transferred, four hydrogen ions are translocated across the cytoplasmic membrane), and thus conserves the redox energy in a proton gradient. This chain is NADH-quinone oxidoreductase subunit C/D, found in Pseudomonas fluorescens (strain SBW25).